The sequence spans 172 residues: Adenine phosphoribosyltransferase (172 aa).

Belongs to the purine/pyrimidine phosphoribosyltransferase family. As to quaternary structure, homodimer.

The protein resides in the cytoplasm. The catalysed reaction is AMP + diphosphate = 5-phospho-alpha-D-ribose 1-diphosphate + adenine. It functions in the pathway purine metabolism; AMP biosynthesis via salvage pathway; AMP from adenine: step 1/1. Functionally, catalyzes a salvage reaction resulting in the formation of AMP, that is energically less costly than de novo synthesis. In Synechococcus sp. (strain CC9311), this protein is Adenine phosphoribosyltransferase.